We begin with the raw amino-acid sequence, 520 residues long: Cyclic GMP-AMP synthase-like receptor (520 aa).

ATP-binding positions include Ser-68 and 80–82 (EFD). 3 residues coordinate Mg(2+): Glu-80, Asp-82, and Asp-198. Asp-198 provides a ligand contact to GTP. Lys-264 provides a ligand contact to ATP. 2 residues coordinate Mn(2+): Leu-288 and Asp-294.

Belongs to the mab-21 family. Mg(2+) is required as a cofactor. The cofactor is Mn(2+).

It catalyses the reaction GTP + ATP = 2',3'-cGAMP + 2 diphosphate. The catalysed reaction is GTP + ATP = pppGp(2'-5')A + diphosphate. The enzyme catalyses pppGp(2'-5')A = 2',3'-cGAMP + diphosphate. Its function is as follows. Nucleotidyltransferase that catalyzes the formation of cyclic GMP-AMP (2',3'-cGAMP) from ATP and GTP and plays a key role in innate immunity. Acts as a key sensor of double-stranded RNA (dsRNA), the presence of dsRNA in the cytoplasm being a danger signal that triggers the immune responses. Directly binds dsRNA, activating the nucleotidyltransferase activity, leading to synthesis of 2',3'-cGAMP, a second messenger that binds to and activates Sting, thereby triggering the immune response via activation of the NF-kappa-B transcription factor. This chain is Cyclic GMP-AMP synthase-like receptor, found in Microplitis demolitor (Parasitoid wasp).